We begin with the raw amino-acid sequence, 279 residues long: MKQTDATNIEESIQTDFKKDMSYGDYLQLDSLLTSQQRLSDHHDEMLFIVIHQTSELWMKLILHEMTAAIQAIADDQLERSFKMLARVSKIQQQLIQSWSVLSTLTPAEYLEFRDSLGHSSGFQSYQNRQIEFSLGFKNAQMLRVYEHETALFAQLNDDLQTPSIYDETVRAMHRRGLPIDEAVLNRDVTQDWEADASVEAAWAIVYQDVEQYWDLYELGEKLLDIGSQQQMWRFNHMSTVERIIGQKPGTGGSSGVSYLRRVLDHRFFPELWSVRTKL.

Substrate is bound by residues 48 to 52 (FIVIH), Tyr110, and Arg114. His237 contacts heme. Residue Thr251 coordinates substrate.

It belongs to the tryptophan 2,3-dioxygenase family. Homotetramer. The cofactor is heme.

The enzyme catalyses L-tryptophan + O2 = N-formyl-L-kynurenine. Its pathway is amino-acid degradation; L-tryptophan degradation via kynurenine pathway; L-kynurenine from L-tryptophan: step 1/2. In terms of biological role, heme-dependent dioxygenase that catalyzes the oxidative cleavage of the L-tryptophan (L-Trp) pyrrole ring and converts L-tryptophan to N-formyl-L-kynurenine. Catalyzes the oxidative cleavage of the indole moiety. The protein is Tryptophan 2,3-dioxygenase of Exiguobacterium sibiricum (strain DSM 17290 / CCUG 55495 / CIP 109462 / JCM 13490 / 255-15).